A 173-amino-acid chain; its full sequence is Crossover junction endodeoxyribonuclease RuvC (173 aa).

Catalysis depends on residues Asp-8, Glu-67, and Asp-139. 3 residues coordinate Mg(2+): Asp-8, Glu-67, and Asp-139.

The protein belongs to the RuvC family. As to quaternary structure, homodimer which binds Holliday junction (HJ) DNA. The HJ becomes 2-fold symmetrical on binding to RuvC with unstacked arms; it has a different conformation from HJ DNA in complex with RuvA. In the full resolvosome a probable DNA-RuvA(4)-RuvB(12)-RuvC(2) complex forms which resolves the HJ. Requires Mg(2+) as cofactor.

It localises to the cytoplasm. It catalyses the reaction Endonucleolytic cleavage at a junction such as a reciprocal single-stranded crossover between two homologous DNA duplexes (Holliday junction).. Functionally, the RuvA-RuvB-RuvC complex processes Holliday junction (HJ) DNA during genetic recombination and DNA repair. Endonuclease that resolves HJ intermediates. Cleaves cruciform DNA by making single-stranded nicks across the HJ at symmetrical positions within the homologous arms, yielding a 5'-phosphate and a 3'-hydroxyl group; requires a central core of homology in the junction. The consensus cleavage sequence is 5'-(A/T)TT(C/G)-3'. Cleavage occurs on the 3'-side of the TT dinucleotide at the point of strand exchange. HJ branch migration catalyzed by RuvA-RuvB allows RuvC to scan DNA until it finds its consensus sequence, where it cleaves and resolves the cruciform DNA. In Aliivibrio fischeri (strain ATCC 700601 / ES114) (Vibrio fischeri), this protein is Crossover junction endodeoxyribonuclease RuvC.